The sequence spans 687 residues: Fork-head transcriptional regulator 2 (687 aa).

Residues 1–23 are disordered; the sequence is MSAQFITPKKRPHSPLDSNELLP. One can recognise an FHA domain in the interval 82–146; the sequence is VSIGRNIELS…NGARIDGQKV (65 aa). Residues 226-241 show a composition bias toward polar residues; that stretch reads SPSSISANSLQSNLDQ. Residues 226-246 are disordered; sequence SPSSISANSLQSNLDQDLSKE. Residues 252 to 350 constitute a DNA-binding region (fork-head); it reads KPPYSYATMI…SDGTISKTRR (99 aa). Disordered regions lie at residues 385–449, 472–569, and 584–687; these read AASI…RYTP, QLGR…IGLN, and PERG…MIDS. Over residues 389-410 the composition is skewed to low complexity; the sequence is PQQQKQQQQQQKRPPQQQNSQP. Over residues 411–442 the composition is skewed to polar residues; that stretch reads HLSQPHYTIPSNPMQTNSMGYIPQSNIYNMSN. Residues 472–490 show a composition bias toward low complexity; it reads QLGRPQGQLGQPMMQPQQQ. The segment covering 491-540 has biased composition (polar residues); that stretch reads SYTSSNIKTEPSSPKRNPSISNNTPKMAKGTVSTESHSRSTSYTTTQLHE. Low complexity-rich tracts occupy residues 542–563 and 589–624; these read SNFNSSANDSTSTAPTASTTTN and KGNPSGTNNNNNTNNTNTNTTNNNNGKNTAGGPNTN. The segment covering 625–659 has biased composition (polar residues); it reads QSSPAFWNFVQFSTPNGQSPVRKSSEEVGNNSPTL. The short motif at 663 to 670 is the Nuclear localization signal element; it reads IKREREND.

The protein resides in the nucleus. Functionally, transcription factor required for the morphogenesis of true hyphal as well as yeast cells. Contributes to virulence. The chain is Fork-head transcriptional regulator 2 (FKH2) from Candida albicans (strain SC5314 / ATCC MYA-2876) (Yeast).